We begin with the raw amino-acid sequence, 76 residues long: UPF0352 protein ECA2748 (76 aa).

The protein belongs to the UPF0352 family.

This Pectobacterium atrosepticum (strain SCRI 1043 / ATCC BAA-672) (Erwinia carotovora subsp. atroseptica) protein is UPF0352 protein ECA2748.